The sequence spans 70 residues: Melittin-N (70 aa).

A signal peptide spans 1-21 (MKFLVNVALVFMVVYISYIYA). The propeptide at 22–43 (APEPEPAPEPEAEADAEADPEA) is removed by a dipeptidylpeptidase. Glycine 44 carries the post-translational modification N-formylglycine; partial. Glutamine 69 carries the post-translational modification Glutamine amide.

It belongs to the melittin family. As to quaternary structure, monomer (in solution and for integration into membranes), homotetramer (in solution and potentially as a toroidal pore in membranes), and potenially homomultimer (as a toroidal pore in membranes). As to expression, expressed by the venom gland.

It is found in the secreted. The protein localises to the target cell membrane. Main toxin of bee venom with strong hemolytic activity and antimicrobial activity. It has enhancing effects on bee venom phospholipase A2 activity. This amphipathic toxin binds to negatively charged membrane surface and forms pore by inserting into lipid bilayers inducing the leakage of ions and molecules and the enhancement of permeability that ultimately leads to cell lysis. It acts as a voltage-gated pore with higher selectivity for anions over cations. The ion conductance has been shown to be voltage-dependent. Self-association of melittin in membranes is promoted by high ionic strength, but not by the presence of negatively charged lipids. In vivo, intradermal injection into healthy human volunteers produce sharp pain sensation and an inflammatory response. It produces pain by activating primary nociceptor cells directly and indirectly due to its ability to activate plasma membrane phospholipase A2 and its pore-forming activity. Shows lower cytotoxicity when tested on E.coli and cancer cell lines than melittin, as well as lower anti-inflammatory properties and lower properties to interact to small unilamellar liposomes. This is Melittin-N (MELT) from Apis cerana (Indian honeybee).